A 248-amino-acid chain; its full sequence is Small ribosomal subunit protein uS3 (248 aa).

The KH type-2 domain maps to 39–113 (IRAYLTKQLS…TIRINVVEVT (75 aa)). The segment at 218-248 (ERPEQKVPLQQPKRRQQRRRPTFEDRSAVEA) is disordered. Residues 238–248 (PTFEDRSAVEA) show a composition bias toward basic and acidic residues.

Belongs to the universal ribosomal protein uS3 family. As to quaternary structure, part of the 30S ribosomal subunit. Forms a tight complex with proteins S10 and S14.

Binds the lower part of the 30S subunit head. Binds mRNA in the 70S ribosome, positioning it for translation. The protein is Small ribosomal subunit protein uS3 of Synechococcus sp. (strain JA-3-3Ab) (Cyanobacteria bacterium Yellowstone A-Prime).